We begin with the raw amino-acid sequence, 104 residues long: L-rhamnose mutarotase (104 aa).

Substrate is bound at residue Tyr18. His22 acts as the Proton donor in catalysis. Substrate contacts are provided by residues Tyr41 and 76-77 (WW).

It belongs to the rhamnose mutarotase family. Homodimer.

The protein resides in the cytoplasm. The catalysed reaction is alpha-L-rhamnose = beta-L-rhamnose. The protein operates within carbohydrate metabolism; L-rhamnose metabolism. In terms of biological role, involved in the anomeric conversion of L-rhamnose. This Citrobacter koseri (strain ATCC BAA-895 / CDC 4225-83 / SGSC4696) protein is L-rhamnose mutarotase.